A 219-amino-acid polypeptide reads, in one-letter code: N-(5'-phosphoribosyl)anthranilate isomerase (219 aa).

The protein belongs to the TrpF family.

The enzyme catalyses N-(5-phospho-beta-D-ribosyl)anthranilate = 1-(2-carboxyphenylamino)-1-deoxy-D-ribulose 5-phosphate. It functions in the pathway amino-acid biosynthesis; L-tryptophan biosynthesis; L-tryptophan from chorismate: step 3/5. The chain is N-(5'-phosphoribosyl)anthranilate isomerase from Mesorhizobium japonicum (strain LMG 29417 / CECT 9101 / MAFF 303099) (Mesorhizobium loti (strain MAFF 303099)).